We begin with the raw amino-acid sequence, 264 residues long: NFAT activation molecule 1 (264 aa).

A signal peptide spans 1-37 (MESWLLRRGARVRCLHPPSWLPAWCFLCLLPVPQTLQ). Topologically, residues 38–159 (LTGLVSLTHT…QPPAFKVQEA (122 aa)) are extracellular. The Ig-like V-type domain maps to 49–145 (LPIMVSLANT…QSDGVVILVR (97 aa)). A disulfide bridge connects residues Cys-64 and Cys-110. N-linked (GlcNAc...) asparagine glycosylation is found at Asn-105 and Asn-118. Residues 160-180 (LMLGFTSLMSVLGVLGTALLL) form a helical membrane-spanning segment. Topologically, residues 181 to 264 (WKKKQISVLG…NEFNLVYENL (84 aa)) are cytoplasmic. One can recognise an ITAM domain in the interval 212-232 (ESVYTSLQRRETEVYACMKEE). Tyr-215 and Tyr-226 each carry phosphotyrosine.

No direct interaction with the B-cell antigen receptor (BCR). Interacts with SYK; probably involved in BCR signaling. Interacts with ZAP70. Post-translationally, N-glycosylated. In terms of tissue distribution, highly expressed in the spleen, expressed by both B- and CD4+ and CD8+ T-cells, as well as non-T- and non-B-cells, including macrophages and neutrophils. Expressed at low levels, if any, in non-immune tissue.

Its subcellular location is the cell membrane. Functionally, may function in immune system as a receptor which activates via the calcineurin/NFAT-signaling pathway the downstream cytokine gene promoters. Activates the transcription of IL-13 and TNF-alpha promoters. May be involved in the regulation of B-cell, but not T-cell, development. The chain is NFAT activation molecule 1 (Nfam1) from Mus musculus (Mouse).